A 100-amino-acid chain; its full sequence is Small ribosomal subunit protein uS14c (100 aa).

This sequence belongs to the universal ribosomal protein uS14 family. As to quaternary structure, part of the 30S ribosomal subunit.

Its subcellular location is the plastid. It is found in the chloroplast. In terms of biological role, binds 16S rRNA, required for the assembly of 30S particles. This chain is Small ribosomal subunit protein uS14c, found in Crucihimalaya wallichii (Rock-cress).